A 738-amino-acid polypeptide reads, in one-letter code: Catalase-peroxidase 2 (738 aa).

Residues 1 to 26 (MKRTLPTLSALALSMSLALAAGQTQA) form the signal peptide. A cross-link (tryptophyl-tyrosyl-methioninium (Trp-Tyr) (with M-252)) is located at residues 104-226 (WHSAGVYRIF…LGATQMGLIY (123 aa)). The Proton acceptor role is filled by histidine 105. The segment at residues 226 to 252 (YVNPEGPNGVPDPLAAARDIRETFGRM) is a cross-link (tryptophyl-tyrosyl-methioninium (Tyr-Met) (with W-104)). Heme b is bound at residue histidine 267.

The protein belongs to the peroxidase family. Peroxidase/catalase subfamily. As to quaternary structure, homodimer or homotetramer. Heme b serves as cofactor. Post-translationally, formation of the three residue Trp-Tyr-Met cross-link is important for the catalase, but not the peroxidase activity of the enzyme.

It carries out the reaction H2O2 + AH2 = A + 2 H2O. The catalysed reaction is 2 H2O2 = O2 + 2 H2O. In terms of biological role, bifunctional enzyme with both catalase and broad-spectrum peroxidase activity. The sequence is that of Catalase-peroxidase 2 from Shewanella amazonensis (strain ATCC BAA-1098 / SB2B).